A 216-amino-acid chain; its full sequence is MEPAFWQKRWADNQIGFHQAQVNPYLQKYWPRLQLAPASRVLVPLCGKSLDLAWLAGQGYRVLGVELSRQAVEGFFREHGLDADVLQHGAFEVWRSGEIELWCGDFFTLQAEDIADCVGLYDRAALIALPPQMRAAYMRLLSAWLPAGCRGLLVTLDYDQSLLGGPPFSVGDKEVLQGFAGWQMDELEVVELIQESPKFLQAGACSLLERVYRVKR.

S-adenosyl-L-methionine-binding residues include W10, L45, E66, and R123.

This sequence belongs to the class I-like SAM-binding methyltransferase superfamily. TPMT family.

The protein resides in the cytoplasm. It carries out the reaction S-adenosyl-L-methionine + a thiopurine = S-adenosyl-L-homocysteine + a thiopurine S-methylether.. This is Thiopurine S-methyltransferase from Pseudomonas putida (strain GB-1).